The chain runs to 1175 residues: Solute carrier family 9 member C1 (1175 aa).

Residues 1-39 (MEMEEISENLTASHSIKLTNMWLELLKSVFLSTPQDLPE) lie on the Extracellular side of the membrane. A helical transmembrane segment spans residues 40–59 (IILILSLICTVGAFLNMHLK). Residues 60–64 (DFPIP) lie on the Cytoplasmic side of the membrane. A helical transmembrane segment spans residues 65 to 82 (LPVILFLIGCCFEILSFA). The Extracellular segment spans residues 83–98 (STQIQIYADAIQWMDP). A helical membrane pass occupies residues 99–115 (DIFFGIFTPVIIFNVAF). Residues 116–125 (DMDIYMLQKL) lie on the Cytoplasmic side of the membrane. Residues 126 to 151 (FWQILVITIPGFLINYTLILWYLQSV) form a helical membrane-spanning segment. Residues 126–213 (FWQILVITIP…SLVIYSGVVH (88 aa)) form a transport core domain region. At 152–157 (NKLSLK) the chain is on the extracellular side. Residues 158-183 (TVPWLLFSAVLISSDPMLTSASIRDL) traverse the membrane as a helical segment. Topologically, residues 184–186 (GLS) are cytoplasmic. Residues 187–212 (RSLTNLINGESLLTSVLSLVIYSGVV) traverse the membrane as a helical segment. Topologically, residues 213–225 (HIRFKSKSVNHTL) are extracellular. Residues 226–257 (AHKVMSTAWSYIVESFITGIVFTKVIQLWMAT) traverse the membrane as a helical segment. The Cytoplasmic segment spans residues 258–261 (IFGD). A helical transmembrane segment spans residues 262-283 (DVNHITLIFSVLYLIFYVCELV). At 284–286 (GMS) the chain is on the extracellular side. A helical transmembrane segment spans residues 287–300 (GIFTLATIGLFLNS). The Cytoplasmic portion of the chain corresponds to 301–307 (TSFKPGV). Residues 308–339 (EAFLLEFWNCLSFIGFLMVFTFIGLLIPAHTY) form a helical membrane-spanning segment. Residues 340-344 (LHISF) are Extracellular-facing. A helical membrane pass occupies residues 345 to 374 (SDVYYSLNIYFTLIVLRLLVFLLMSPILSR). Residues 345–446 (SDVYYSLNIY…FILPMAVTKL (102 aa)) are transport core domain. Residues 375-380 (LGHGFS) are Cytoplasmic-facing. The helical transmembrane segment at 381–411 (WRWAFIMVWSEMKGTPNINMALLLAYSDISL) threads the bilayer. At 412 to 415 (GSER) the chain is on the extracellular side. A helical transmembrane segment spans residues 416–446 (ERSQILFHGVSVCVITLIVNRFILPMAVTKL). Over 447–632 (GLRDVTSTKY…ACHRIVFTNE (186 aa)) the chain is Cytoplasmic. The segment at 618–698 (YMFLHACHRI…EFFSHTWLLF (81 aa)) is ion transport-like. Residues 633–653 (FEYTGYLVVLMSTYPMIICWI) traverse the membrane as a helical segment. Residues 654–657 (SRLK) are Extracellular-facing. Residues 658 to 684 (DIYDNEIKCANYYFLAFYILEALLKVA) traverse the membrane as a helical segment. The Cytoplasmic portion of the chain corresponds to 685–691 (AMRKEFF). A helical membrane pass occupies residues 692–716 (SHTWLLFELGITLVGVLDIILIETD). The Extracellular portion of the chain corresponds to 717–724 (SISYNFDL). The helical transmembrane segment at 725–751 (TETVVFMNVIRLLRILRILKLVTPKLL) threads the bilayer. Over 752–1175 (QIIDKRMSQQ…EELIEENINI (424 aa)) the chain is Cytoplasmic. Residues 1137 to 1146 (MKPDSERESF) show a composition bias toward basic and acidic residues. Positions 1137–1175 (MKPDSERESFETLDETSEEDNGKKENQENEELIEENINI) are disordered. Positions 1164-1175 (ENEELIEENINI) are enriched in acidic residues.

It belongs to the monovalent cation:proton antiporter 1 (CPA1) transporter (TC 2.A.36) family. In terms of assembly, interacts with soluble adenylyl cyclase (sAC). In terms of tissue distribution, testis-specific. Specifically present in the principal piece of sperm tail (at protein level).

The protein resides in the cell projection. The protein localises to the cilium. It localises to the flagellum membrane. Sperm-specific solute carrier involved in intracellular pH regulation of spermatozoa. Required for sperm motility and fertility. Involved in sperm cell hyperactivation, a step needed for sperm motility which is essential late in the preparation of sperm for fertilization. Required for the expression and bicarbonate regulation of the soluble adenylyl cyclase (sAC). The sequence is that of Solute carrier family 9 member C1 (Slc9c1) from Mus musculus (Mouse).